Here is a 228-residue protein sequence, read N- to C-terminus: Cytidylate kinase (228 aa).

11 to 19 (GPAGTGKSS) serves as a coordination point for ATP.

It belongs to the cytidylate kinase family. Type 1 subfamily.

It localises to the cytoplasm. The enzyme catalyses CMP + ATP = CDP + ADP. It carries out the reaction dCMP + ATP = dCDP + ADP. The chain is Cytidylate kinase from Mycolicibacterium paratuberculosis (strain ATCC BAA-968 / K-10) (Mycobacterium paratuberculosis).